We begin with the raw amino-acid sequence, 1151 residues long: Calcium-activated potassium channel subunit alpha-1 (1151 aa).

Residues 1-36 (MSSNIHANHLSLDASSSSSSSSSSSSSSSSSSSVHE) form a disordered region. Topologically, residues 1-59 (MSSNIHANHLSLDASSSSSSSSSSSSSSSSSSSVHEPKMDALIIPVTMEVPCDSRGQRM) are extracellular. Low complexity predominate over residues 15 to 33 (SSSSSSSSSSSSSSSSSSS). A helical membrane pass occupies residues 60-80 (WWAFLASSMVTFFGGLFIILL). The Cytoplasmic segment spans residues 81–151 (WRTLKYLWTV…MISAQTLTGR (71 aa)). Residues C91, C92, and C94 are each lipidated (S-palmitoyl cysteine). A helical membrane pass occupies residues 152-172 (VLVVLVFALSIGALVIYFIDS). The Extracellular segment spans residues 173–187 (SNPIESCQNFYKDFT). Residues 188 to 208 (LQIDMAFNVFFLLYFGLRFIA) form a helical membrane-spanning segment. Over 209 to 212 (ANDK) the chain is Cytoplasmic. A helical membrane pass occupies residues 213–233 (LWFWLEVNSVVDFFTVPPVFV). The Extracellular segment spans residues 234-237 (SVYL). A helical; Voltage-sensor membrane pass occupies residues 238–258 (NRSWLGLRFLRALRLIQFSEI). The Cytoplasmic segment spans residues 259–273 (LQFLNILKTSNSIKL). Residues 274 to 294 (VNLLSIFISTWLTAAGFIHLV) traverse the membrane as a helical segment. The Extracellular segment spans residues 295–308 (ENSGDPWENFQNNQ). Positions 309 to 331 (ALTYWECVYLLMVTMSTVGYGDV) form an intramembrane region, pore-forming. The short motif at 325–328 (TVGY) is the Selectivity for potassium element. At 332 to 340 (YAKTTLGRL) the chain is on the extracellular side. Residues 341-361 (FMVFFILGGLAMFASYVPEII) traverse the membrane as a helical segment. Topologically, residues 362 to 1151 (ELIGNRKKYG…KQKYVQEERL (790 aa)) are cytoplasmic. The region spanning 380 to 522 (RKHIVVCGHI…WNWKEGDDAI (143 aa)) is the RCK N-terminal 1 domain. Residues E412, Q435, and E437 each coordinate Mg(2+). Positions 529–549 (LGFIAQSCLAQGLSTMLANLF) are segment S7. Residues 586–606 (LSFPTVCELCFVKLKLLMIAI) are segment S8. The interval 650-654 (CKACH) is heme-binding motif. Residues 674–702 (EQPSTLSPKKKQRNGGMRNSPNSSPKLMR) form a disordered region. Residue T678 is modified to Phosphothreonine. Residues S680, S693, and S697 each carry the phosphoserine modification. The segment at 752–772 (VLSGHVVVCIFGDVSSALIGL) is segment S9. Residues 754–898 (SGHVVVCIFG…MDRSSPDNSP (145 aa)) enclose the RCK N-terminal 2 domain. T885 is subject to Phosphothreonine. Phosphoserine occurs at positions 893 and 897. Residues 918 to 940 (TELVNDTNVQFLDQDDDDDPDTE) carry the Calcium bowl motif. Ca(2+)-binding residues include Q927, D930, D933, and D935. The segment at 947–967 (FACGTAFAVSVLDSLMSATYF) is segment S10. The span at 1101 to 1126 (RASLSHSSHSSQSSSKKSSSVHSIPS) shows a compositional bias: low complexity. The segment at 1101-1151 (RASLSHSSHSSQSSSKKSSSVHSIPSTANRQNRPKSRESRDKQKYVQEERL) is disordered. The span at 1135–1151 (KSRESRDKQKYVQEERL) shows a compositional bias: basic and acidic residues. 2 positions are modified to phosphoserine: S1136 and S1139.

This sequence belongs to the potassium channel family. Calcium-activated (TC 1.A.1.3) subfamily. KCa1.1/KCNMA1 sub-subfamily. In terms of assembly, homotetramer; which constitutes the calcium-activated potassium channel. Interacts with beta subunits KCNMB1, KCNMB2, KCNMB3 and KCNMB4. Interacts with gamma subunits LRRC26, LRRC38, LRRC52 and LRRC55. Beta and gamma subunits are accessory, and modulate its activity. Interacts with RAB11B. Post-translationally, phosphorylated. Phosphorylation by kinases such as PKA and/or PKG. In smooth muscles, phosphorylation affects its activity. Palmitoylation by ZDHHC22 and ZDHHC23 within the intracellular linker between the S0 and S1 transmembrane domains regulates localization to the plasma membrane. Depalmitoylated by LYPLA1 and LYPLAL1, leading to retard exit from the trans-Golgi network.

Its subcellular location is the cell membrane. It carries out the reaction K(+)(in) = K(+)(out). Ethanol and carbon monoxide-bound heme increase channel activation. Heme inhibits channel activation. Its function is as follows. Potassium channel activated by both membrane depolarization or increase in cytosolic Ca(2+) that mediates export of K(+). It is also activated by the concentration of cytosolic Mg(2+). Its activation dampens the excitatory events that elevate the cytosolic Ca(2+) concentration and/or depolarize the cell membrane. It therefore contributes to repolarization of the membrane potential. Plays a key role in controlling excitability in a number of systems, such as regulation of the contraction of smooth muscle, the tuning of hair cells in the cochlea, regulation of transmitter release, and innate immunity. In smooth muscles, its activation by high level of Ca(2+), caused by ryanodine receptors in the sarcoplasmic reticulum, regulates the membrane potential. In cochlea cells, its number and kinetic properties partly determine the characteristic frequency of each hair cell and thereby helps to establish a tonotopic map. Kinetics of KCNMA1 channels are determined by alternative splicing, phosphorylation status and its combination with modulating beta subunits. Highly sensitive to both iberiotoxin (IbTx) and charybdotoxin (CTX). The sequence is that of Calcium-activated potassium channel subunit alpha-1 (KCNMA1) from Macaca mulatta (Rhesus macaque).